The following is a 295-amino-acid chain: Protoheme IX farnesyltransferase (295 aa).

9 helical membrane-spanning segments follow: residues 9–29 (ITKP…FFLA), 36–56 (FGVF…GCVF), 80–100 (LVSL…GVGL), 108–128 (LAAL…SLYL), 135–155 (GTLV…CAVS), 163–183 (LTLL…IAIF), 209–229 (IMLY…GGYA), 230–250 (GLNY…MAWK), and 265–285 (FVFS…DFQV).

It belongs to the UbiA prenyltransferase family. Protoheme IX farnesyltransferase subfamily.

Its subcellular location is the cell inner membrane. It catalyses the reaction heme b + (2E,6E)-farnesyl diphosphate + H2O = Fe(II)-heme o + diphosphate. It functions in the pathway porphyrin-containing compound metabolism; heme O biosynthesis; heme O from protoheme: step 1/1. Its function is as follows. Converts heme B (protoheme IX) to heme O by substitution of the vinyl group on carbon 2 of heme B porphyrin ring with a hydroxyethyl farnesyl side group. The sequence is that of Protoheme IX farnesyltransferase from Pseudomonas syringae pv. syringae (strain B728a).